Here is a 76-residue protein sequence, read N- to C-terminus: Small ribosomal subunit protein bS16c (76 aa).

This sequence belongs to the bacterial ribosomal protein bS16 family.

It is found in the plastid. Its subcellular location is the chloroplast. The protein is Small ribosomal subunit protein bS16c of Guillardia theta (Cryptophyte).